Here is a 399-residue protein sequence, read N- to C-terminus: F-box protein At1g10110 (399 aa).

An F-box domain is found at Pro-9–Pro-56.

This chain is F-box protein At1g10110, found in Arabidopsis thaliana (Mouse-ear cress).